We begin with the raw amino-acid sequence, 182 residues long: MKSIAVTGYKNFELGIFKKDADEAIYIKETMKRHLVPLIEDGLEWVIISGQLGIELWAGEVVGELKKEAYAIKLAILEPFENQSGNWNEANKIWASEVLTIADYHAFITKRPYENPSQFAARDGFIIDNTDGAILVYDLEKEGSPKFFYDRAKLAKERSDYYLECIDFYALQDVVEDMNQAF.

The protein belongs to the UPF0398 family.

The sequence is that of UPF0398 protein lwe1908 from Listeria welshimeri serovar 6b (strain ATCC 35897 / DSM 20650 / CCUG 15529 / CIP 8149 / NCTC 11857 / SLCC 5334 / V8).